The sequence spans 556 residues: CBS domain-containing protein CBSCBSPB3 (556 aa).

Polar residues-rich tracts occupy residues 1 to 20 and 30 to 44; these read MSTQATGPSSTSGRRSNSTV and PVQSENGSVNGNTSK. The interval 1–63 is disordered; sequence MSTQATGPSS…SQAPSNGERT (63 aa). An N-acetylserine modification is found at S2. CBS domains lie at 68–127, 134–189, 235–294, and 302–360; these read RLSK…RPDQ, MTRN…RMEK, ITDN…LSPE, and MTPN…ENSS. One can recognise a PB1 domain in the interval 414 to 502; that stretch reads GNSFSFKFED…KVLRLHLDFT (89 aa). The helical transmembrane segment at 527–549 threads the bilayer; it reads WVSWRGGVVVTGAVVLTSIAIVV.

The protein localises to the membrane. The chain is CBS domain-containing protein CBSCBSPB3 (CBSCBSPB3) from Arabidopsis thaliana (Mouse-ear cress).